Reading from the N-terminus, the 681-residue chain is Hydroxyproline O-galactosyltransferase GALT6 (681 aa).

Topologically, residues 1–28 are cytoplasmic; it reads MRKPKLSKLERLEKFDIFVSLSKQRSVQ. The helical; Signal-anchor for type II membrane protein transmembrane segment at 29 to 49 threads the bilayer; it reads ILMAVGLLYMLLITFEIPFVF. Residues 50-681 are Lumenal-facing; sequence KTGLSSLSQD…TGKPQCCNMR (632 aa). Positions 57 to 80 are disordered; the sequence is SQDPLTRPEKHNSQRELQERRAPT. Over residues 62-78 the composition is skewed to basic and acidic residues; that stretch reads TRPEKHNSQRELQERRA. One can recognise a Galectin domain in the interval 187-401; sequence NIMELPCGLT…DIDVHSVFAG (215 aa). An N-linked (GlcNAc...) asparagine glycan is attached at Asn-629.

It belongs to the glycosyltransferase 31 family. The cofactor is Mn(2+). As to expression, expressed in junveile leaves and stems, and at lower levels in cauline leaves and siliques.

The protein localises to the golgi apparatus membrane. Its pathway is protein modification; protein glycosylation. In terms of biological role, possesses hydroxyproline O-galactosyltransferase activity. Transfers galactose from UDP-galactose to hydroxyproline residues in the arabinogalactan proteins (AGPs). Is specific for AGPs containing non-contiguous peptidyl hydroxyproline residues. Utilizes UDP-galactose solely as sugar donor. The addition of galactose onto the peptidyl hydroxyproline residues in AGP core proteins represents the first committed step in arabinogalactan polysaccharide addition. AGP glycans play essential roles in both vegetative and reproductive plant growth. The chain is Hydroxyproline O-galactosyltransferase GALT6 from Arabidopsis thaliana (Mouse-ear cress).